The primary structure comprises 88 residues: Meiosis-expressed gene 1 protein (88 aa).

The protein belongs to the MEIG1 family. As to quaternary structure, interacts with PACRG. Interacts with MORN3. As to expression, expressed in the testes (at protein level). Expressed in the ovary. Several isoforms have been identified differing in their 5'-untranslated exons. These isoforms show different tissue expression. Some are expressed in various tissues, including lung, liver, brain, testis, oviduct and oocytes. Some are testis-specific.

Its function is as follows. Essential for spermiogenesis. In Mus musculus (Mouse), this protein is Meiosis-expressed gene 1 protein.